We begin with the raw amino-acid sequence, 184 residues long: Potassium-transporting ATPase KdpC subunit (184 aa).

Residues 10 to 30 (LTFLMVVLFAVIYPLAIYGIA) form a helical membrane-spanning segment.

It belongs to the KdpC family. As to quaternary structure, the system is composed of three essential subunits: KdpA, KdpB and KdpC.

Its subcellular location is the cell inner membrane. In terms of biological role, part of the high-affinity ATP-driven potassium transport (or Kdp) system, which catalyzes the hydrolysis of ATP coupled with the electrogenic transport of potassium into the cytoplasm. This subunit acts as a catalytic chaperone that increases the ATP-binding affinity of the ATP-hydrolyzing subunit KdpB by the formation of a transient KdpB/KdpC/ATP ternary complex. This is Potassium-transporting ATPase KdpC subunit from Flavobacterium psychrophilum (strain ATCC 49511 / DSM 21280 / CIP 103535 / JIP02/86).